The following is a 55-amino-acid chain: Trypsin inhibitor (55 aa).

In terms of domain architecture, Kazal-like spans 1–55; that stretch reads AHMDCTEFNPLCRCNKMLGDLICAVIGDAKEEHRNMCALCCEHPGGFEYSNGPCE. Disulfide bonds link Cys-5–Cys-40, Cys-12–Cys-41, Cys-14–Cys-37, and Cys-23–Cys-54.

It localises to the secreted. Functionally, potent inhibitor of trypsin. This chain is Trypsin inhibitor, found in Halocynthia roretzi (Sea squirt).